A 152-amino-acid chain; its full sequence is Protein Turandot X (152 aa).

The N-terminal stretch at 1–22 (MGFYISSLLICVFLGIVRFASA) is a signal peptide.

Belongs to the Turandot family.

It localises to the secreted. A humoral factor that may play a role in stress tolerance. In Drosophila erecta (Fruit fly), this protein is Protein Turandot X.